We begin with the raw amino-acid sequence, 550 residues long: Glucose-6-phosphate isomerase 3 (550 aa).

E357 functions as the Proton donor in the catalytic mechanism. Residues H388 and K514 contribute to the active site.

The protein belongs to the GPI family.

The protein resides in the cytoplasm. The enzyme catalyses alpha-D-glucose 6-phosphate = beta-D-fructose 6-phosphate. It functions in the pathway carbohydrate biosynthesis; gluconeogenesis. The protein operates within carbohydrate degradation; glycolysis; D-glyceraldehyde 3-phosphate and glycerone phosphate from D-glucose: step 2/4. Functionally, catalyzes the reversible isomerization of glucose-6-phosphate to fructose-6-phosphate. The sequence is that of Glucose-6-phosphate isomerase 3 from Rhodococcus jostii (strain RHA1).